The primary structure comprises 200 residues: Probable gluconokinase (200 aa).

34–41 (GVSGSGKT) provides a ligand contact to ATP.

Belongs to the gluconokinase GntK/GntV family.

The enzyme catalyses D-gluconate + ATP = 6-phospho-D-gluconate + ADP + H(+). It functions in the pathway carbohydrate acid metabolism; D-gluconate degradation. The polypeptide is Probable gluconokinase (Dictyostelium discoideum (Social amoeba)).